The primary structure comprises 1213 residues: Chitin synthase 3 (1213 aa).

Positions 1–97 (MSNFRDSSSP…TPPHQEEEED (97 aa)) are disordered. Topologically, residues 1 to 168 (MSNFRDSSSP…KPKHDIYFWK (168 aa)) are cytoplasmic. A compositionally biased stretch (basic and acidic residues) spans 32 to 44 (IRPERSRMDESHP). Positions 75 to 87 (ELSTSRSHLSNYA) are enriched in polar residues. A helical transmembrane segment spans residues 169 to 189 (VYCYAITFWAPAPLLKLFGLP). Residues 190–200 (TKDRQFAWREK) are Extracellular-facing. The chain crosses the membrane as a helical span at residues 201 to 221 (IGLISCILYVGAFVAYLTFGF). At 222–450 (TKTVCSSQVV…TDTIGCIASK (229 aa)) the chain is on the cytoplasmic side. Residues 451-471 (VVLYMSLVFILSVVVVKFIMA) traverse the membrane as a helical segment. Residues 472–1016 (CWFKWVTSRK…INSTVHNLFE (545 aa)) are Extracellular-facing. N-linked (GlcNAc...) asparagine glycans are attached at residues Asn-588 and Asn-1008. A helical membrane pass occupies residues 1017–1037 (LVLVKDLCGTFCFSMQFVIFI). Residues 1038–1039 (EL) lie on the Cytoplasmic side of the membrane. A helical transmembrane segment spans residues 1040–1060 (IGTLVLPAAITFTIYVIIVAI). Topologically, residues 1061 to 1065 (VSKPT) are extracellular. The chain crosses the membrane as a helical span at residues 1066-1086 (PVMSLVLLAVIFGLPGCLIVI). Residues 1087–1213 (TVSSLSYLVY…LSQGSSSGSS (127 aa)) lie on the Cytoplasmic side of the membrane. The interval 1161 to 1213 (ERRSTENRKQQQQQQLTNNSSNNLAVPGAAWDPSNTGGNLIDDLSQGSSSGSS) is disordered.

This sequence belongs to the chitin synthase family. Class IV subfamily.

It localises to the cell membrane. The catalysed reaction is [(1-&gt;4)-N-acetyl-beta-D-glucosaminyl](n) + UDP-N-acetyl-alpha-D-glucosamine = [(1-&gt;4)-N-acetyl-beta-D-glucosaminyl](n+1) + UDP + H(+). Polymerizes chitin, a structural polymer of the cell wall and septum, by transferring the sugar moiety of UDP-GlcNAc to the non-reducing end of the growing chitin polymer. In Candida albicans (Yeast), this protein is Chitin synthase 3 (CHS3).